The chain runs to 111 residues: Nucleoid-associated protein Cag_1190 (111 aa).

This sequence belongs to the YbaB/EbfC family. In terms of assembly, homodimer.

The protein resides in the cytoplasm. It localises to the nucleoid. Its function is as follows. Binds to DNA and alters its conformation. May be involved in regulation of gene expression, nucleoid organization and DNA protection. The polypeptide is Nucleoid-associated protein Cag_1190 (Chlorobium chlorochromatii (strain CaD3)).